A 209-amino-acid polypeptide reads, in one-letter code: Potassium-transporting ATPase KdpC subunit (209 aa).

A helical membrane pass occupies residues 18-38 (ALALFVLLGLGLGYSLVATGI).

It belongs to the KdpC family. In terms of assembly, the system is composed of three essential subunits: KdpA, KdpB and KdpC.

The protein resides in the cell inner membrane. Part of the high-affinity ATP-driven potassium transport (or Kdp) system, which catalyzes the hydrolysis of ATP coupled with the electrogenic transport of potassium into the cytoplasm. This subunit acts as a catalytic chaperone that increases the ATP-binding affinity of the ATP-hydrolyzing subunit KdpB by the formation of a transient KdpB/KdpC/ATP ternary complex. This is Potassium-transporting ATPase KdpC subunit from Xanthomonas campestris pv. campestris (strain 8004).